The chain runs to 190 residues: Copper-binding lipoprotein NosL (190 aa).

The N-terminal stretch at 1–23 (MNALHRIGAGTLLAVLLAFGLTG) is a signal peptide. A lipid anchor (N-palmitoyl cysteine) is attached at C24. The S-diacylglycerol cysteine moiety is linked to residue C24. The disordered stretch occupies residues 170 to 190 (MQHGGMHDHAPNGAHNAHAGH). Over residues 180 to 190 (PNGAHNAHAGH) the composition is skewed to low complexity.

Belongs to the NosL family. In terms of assembly, monomer.

It localises to the cell membrane. Its function is as follows. May act as a metallochaperone involved in nitrous oxide reductase assembly. Specifically binds Cu(+). In Stutzerimonas stutzeri (Pseudomonas stutzeri), this protein is Copper-binding lipoprotein NosL.